Reading from the N-terminus, the 626-residue chain is DNA primase (626 aa).

The CHC2-type zinc-finger motif lies at 39–63; sequence CPFHGEKTPSFSVSPEKQIFHCFGC. The Toprim domain maps to 264–346; it reads EEITLMEGFM…DVFVLQLPAG (83 aa). Glutamate 270, aspartate 314, and aspartate 316 together coordinate Mg(2+).

The protein belongs to the DnaG primase family. In terms of assembly, monomer. Interacts with DnaB. Zn(2+) is required as a cofactor. It depends on Mg(2+) as a cofactor.

It carries out the reaction ssDNA + n NTP = ssDNA/pppN(pN)n-1 hybrid + (n-1) diphosphate.. RNA polymerase that catalyzes the synthesis of short RNA molecules used as primers for DNA polymerase during DNA replication. The polypeptide is DNA primase (Listeria monocytogenes serovar 1/2a (strain ATCC BAA-679 / EGD-e)).